Consider the following 325-residue polypeptide: L-lactate dehydrogenase (325 aa).

Residues Val-19, Asp-40, Lys-45, Tyr-70, and 84-85 each bind NAD(+); that span reads GA. Positions 87 and 93 each coordinate substrate. NAD(+) is bound by residues Thr-106, 123 to 125, and Ser-148; that span reads AAN. Residue 125–128 participates in substrate binding; the sequence is NPVD. 153 to 156 serves as a coordination point for substrate; it reads DSAR. Arg-158 and His-173 together coordinate beta-D-fructose 1,6-bisphosphate. Catalysis depends on His-180, which acts as the Proton acceptor. A Phosphotyrosine modification is found at Tyr-225. Thr-234 serves as a coordination point for substrate.

This sequence belongs to the LDH/MDH superfamily. LDH family. Homotetramer.

The protein localises to the cytoplasm. It catalyses the reaction (S)-lactate + NAD(+) = pyruvate + NADH + H(+). It participates in fermentation; pyruvate fermentation to lactate; (S)-lactate from pyruvate: step 1/1. Allosterically activated by fructose 1,6-bisphosphate (FBP). In terms of biological role, catalyzes the conversion of lactate to pyruvate. In Latilactobacillus sakei subsp. sakei (strain 23K) (Lactobacillus sakei subsp. sakei), this protein is L-lactate dehydrogenase.